A 186-amino-acid polypeptide reads, in one-letter code: Small ribosomal subunit protein uS7 (186 aa).

This sequence belongs to the universal ribosomal protein uS7 family. As to quaternary structure, part of the 30S ribosomal subunit.

Its function is as follows. One of the primary rRNA binding proteins, it binds directly to 16S rRNA where it nucleates assembly of the head domain of the 30S subunit. Is located at the subunit interface close to the decoding center. The polypeptide is Small ribosomal subunit protein uS7 (Methanococcoides burtonii (strain DSM 6242 / NBRC 107633 / OCM 468 / ACE-M)).